The following is a 345-amino-acid chain: Methionine import ATP-binding protein MetN (345 aa).

One can recognise an ABC transporter domain in the interval 2 to 241; sequence IKLNNIXKIF…PKTELAQEFI (240 aa). 38 to 45 contacts ATP; it reads GASGAGKS.

It belongs to the ABC transporter superfamily. Methionine importer (TC 3.A.1.24) family. The complex is composed of two ATP-binding proteins (MetN), two transmembrane proteins (MetI) and a solute-binding protein (MetQ).

It is found in the cell inner membrane. The enzyme catalyses L-methionine(out) + ATP + H2O = L-methionine(in) + ADP + phosphate + H(+). It catalyses the reaction D-methionine(out) + ATP + H2O = D-methionine(in) + ADP + phosphate + H(+). In terms of biological role, part of the ABC transporter complex MetNIQ involved in methionine import. Responsible for energy coupling to the transport system. This chain is Methionine import ATP-binding protein MetN, found in Haemophilus influenzae (strain ATCC 51907 / DSM 11121 / KW20 / Rd).